A 164-amino-acid chain; its full sequence is Peptide methionine sulfoxide reductase MsrA (164 aa).

Residue C16 is part of the active site.

It belongs to the MsrA Met sulfoxide reductase family.

It carries out the reaction L-methionyl-[protein] + [thioredoxin]-disulfide + H2O = L-methionyl-(S)-S-oxide-[protein] + [thioredoxin]-dithiol. The enzyme catalyses [thioredoxin]-disulfide + L-methionine + H2O = L-methionine (S)-S-oxide + [thioredoxin]-dithiol. In terms of biological role, has an important function as a repair enzyme for proteins that have been inactivated by oxidation. Catalyzes the reversible oxidation-reduction of methionine sulfoxide in proteins to methionine. This is Peptide methionine sulfoxide reductase MsrA from Methanoculleus marisnigri (strain ATCC 35101 / DSM 1498 / JR1).